Here is a 492-residue protein sequence, read N- to C-terminus: Glutamyl-tRNA(Gln) amidotransferase subunit A (492 aa).

Catalysis depends on charge relay system residues K78 and S158. The Acyl-ester intermediate role is filled by S182.

This sequence belongs to the amidase family. GatA subfamily. As to quaternary structure, heterotrimer of A, B and C subunits.

It catalyses the reaction L-glutamyl-tRNA(Gln) + L-glutamine + ATP + H2O = L-glutaminyl-tRNA(Gln) + L-glutamate + ADP + phosphate + H(+). Its function is as follows. Allows the formation of correctly charged Gln-tRNA(Gln) through the transamidation of misacylated Glu-tRNA(Gln) in organisms which lack glutaminyl-tRNA synthetase. The reaction takes place in the presence of glutamine and ATP through an activated gamma-phospho-Glu-tRNA(Gln). The protein is Glutamyl-tRNA(Gln) amidotransferase subunit A of Zymomonas mobilis subsp. mobilis (strain ATCC 31821 / ZM4 / CP4).